An 81-amino-acid chain; its full sequence is uncharacterized protein (81 aa).

2 helical membrane passes run Phe-10–Leu-30 and Val-56–Ile-76.

Its subcellular location is the host membrane. This is an uncharacterized protein from Acidianus two-tailed virus (ATV).